We begin with the raw amino-acid sequence, 382 residues long: Anhydro-N-acetylmuramic acid kinase (382 aa).

9–16 lines the ATP pocket; sequence GTSLDGID.

This sequence belongs to the anhydro-N-acetylmuramic acid kinase family.

It catalyses the reaction 1,6-anhydro-N-acetyl-beta-muramate + ATP + H2O = N-acetyl-D-muramate 6-phosphate + ADP + H(+). It functions in the pathway amino-sugar metabolism; 1,6-anhydro-N-acetylmuramate degradation. Its pathway is cell wall biogenesis; peptidoglycan recycling. Catalyzes the specific phosphorylation of 1,6-anhydro-N-acetylmuramic acid (anhMurNAc) with the simultaneous cleavage of the 1,6-anhydro ring, generating MurNAc-6-P. Is required for the utilization of anhMurNAc either imported from the medium or derived from its own cell wall murein, and thus plays a role in cell wall recycling. The chain is Anhydro-N-acetylmuramic acid kinase from Bacillus cereus (strain AH820).